A 320-amino-acid polypeptide reads, in one-letter code: tRNA (guanosine(34)-2'-O)-methyltransferase (320 aa).

Positions 53, 55, 81, 97, and 122 each coordinate S-adenosyl-L-methionine. Lysine 162 acts as the Proton acceptor in catalysis.

This sequence belongs to the class I-like SAM-binding methyltransferase superfamily. RNA methyltransferase RlmE family. TRM7 subfamily. As to quaternary structure, interacts with CG33172/WDR6.

Its subcellular location is the cytoplasm. It carries out the reaction cytidine(32)/guanosine(34) in tRNA + 2 S-adenosyl-L-methionine = 2'-O-methylcytidine(32)/2'-O-methylguanosine(34) in tRNA + 2 S-adenosyl-L-homocysteine + 2 H(+). Its function is as follows. Methylates the 2'-O-ribose of nucleotides at position 34 of the tRNA anticodon loop of substrate tRNAs. May require WDR6 for methylation of the nucleotide at position 34 of the anticodon loop of substrate tRNAs. Plays a role in neurogenesis. Requisite for RNA-mediated gene silencing. Modifies position 34 in tRNA(Leu(CAA)), tRNA(Leu(CAG)), tRNA(Phe(GAA)), and tRNA(Trp(CCA)). This is tRNA (guanosine(34)-2'-O)-methyltransferase from Drosophila melanogaster (Fruit fly).